The primary structure comprises 637 residues: DNA mismatch repair protein MutL (637 aa).

Polar residues predominate over residues 343 to 352; sequence QQSPDRQVSP. The disordered stretch occupies residues 343–411; it reads QQSPDRQVSP…SARNGDVSLP (69 aa). The segment covering 365 to 380 has biased composition (basic and acidic residues); the sequence is SIERKPSVSYDVRDSH. Residues 388-397 are compositionally biased toward low complexity; the sequence is YSSGSSSYRS.

The protein belongs to the DNA mismatch repair MutL/HexB family.

In terms of biological role, this protein is involved in the repair of mismatches in DNA. It is required for dam-dependent methyl-directed DNA mismatch repair. May act as a 'molecular matchmaker', a protein that promotes the formation of a stable complex between two or more DNA-binding proteins in an ATP-dependent manner without itself being part of a final effector complex. This chain is DNA mismatch repair protein MutL, found in Shewanella halifaxensis (strain HAW-EB4).